Here is a 333-residue protein sequence, read N- to C-terminus: Serine/threonine-protein phosphatase PP1-beta (333 aa).

Mn(2+) is bound by residues Asp63, His65, Asp91, and Asn123. His124 (proton donor) is an active-site residue. Positions 172 and 247 each coordinate Mn(2+). The interval 306–333 is disordered; sequence GAGGVGSNRPVTPPRNAPAAQPKKGAKK. Residues 322 to 333 are compositionally biased toward low complexity; the sequence is APAAQPKKGAKK.

Belongs to the PPP phosphatase family. PP-1 subfamily. Interacts with lab-1; the interaction is direct. Interacts with knl-1; the interaction is direct. Mn(2+) is required as a cofactor. As to expression, expressed in gonads, nervous system, intestine and muscles.

It localises to the cytoplasm. It is found in the nucleus. The catalysed reaction is O-phospho-L-seryl-[protein] + H2O = L-seryl-[protein] + phosphate. The enzyme catalyses O-phospho-L-threonyl-[protein] + H2O = L-threonyl-[protein] + phosphate. Inhibited by okadaic acid. Serine/threonine-protein phosphatase essential for chromosomal dynamics during meiosis and mitosis. During meiosis, promotes chromosomal cohesion and germline immortality via a small RNA-mediated genome silencing pathway. Antagonizes the function of air-2 kinase during meiosis I and mitosis to promote chromatid cohesion and spindle attachment. Dephosphorylates histone H3 at 'Ser-10'. Dephosphorylates histone H3 at 'Thr-3'. Also involved in the activation of chloride channel clh-3 during cell swelling and meiotic maturation. Promotes small RNA-mediated genome silencing over multiple generations. Essential for embryogenesis. The protein is Serine/threonine-protein phosphatase PP1-beta of Caenorhabditis elegans.